Here is a 252-residue protein sequence, read N- to C-terminus: NAC domain-containing protein 23 (252 aa).

In terms of domain architecture, NAC spans 12-177; it reads MPPGFRFQPT…EMVLCRISNK (166 aa). A DNA-binding region spans residues 110–183; the sequence is TAVKRRFVFY…ISNKDLPKPP (74 aa). Residues 225–252 are disordered; the sequence is VDDAAAGTDDPGDLDEEIDDSMQRNHGG. Over residues 234–244 the composition is skewed to acidic residues; sequence DPGDLDEEIDD.

Forms heterodimers with NAC26. As to expression, expressed in stems and panicles. Expressed in developing endosperm.

Its subcellular location is the nucleus. The protein localises to the cytoplasm. Its function is as follows. Transcription factor involved in the regulation of seed size. Binds to DNA-specific sequences of CLPD1 and OAT promoters in vitro. The chain is NAC domain-containing protein 23 from Oryza sativa subsp. japonica (Rice).